A 363-amino-acid polypeptide reads, in one-letter code: Double-strand-specific pac1 ribonuclease (363 aa).

Disordered stretches follow at residues 1–35 (MGRF…KRSS) and 92–138 (SRHD…PPLR). Over residues 13 to 22 (DSSSSASDSL) the composition is skewed to low complexity. Basic residues predominate over residues 24-35 (RGRRSLGHKRSS). Residue Ser122 is modified to Phosphoserine. The RNase III domain occupies 139–262 (SEKLKEQVFM…YLGALILDGQ (124 aa)). Residues 285-356 (RPIDKLAKSK…AMQALEVLAK (72 aa)) enclose the DRBM domain.

Requires Mg(2+) as cofactor.

The enzyme catalyses Endonucleolytic cleavage to 5'-phosphomonoester.. Functionally, digests double-stranded RNA. Converts long double-stranded RNAs into short oligonucleotides, leaving 5'-phosphates on their cleavage products. Probably inhibits mating and meiosis by degrading a specific mRNA required for sexual development. The polypeptide is Double-strand-specific pac1 ribonuclease (pac1) (Schizosaccharomyces pombe (strain 972 / ATCC 24843) (Fission yeast)).